A 505-amino-acid chain; its full sequence is AMP phosphorylase (505 aa).

Residues Gly-170, 196 to 201 (SRAITS), and Thr-205 contribute to the AMP site. The Proton donor role is filled by Asp-258. AMP contacts are provided by Ser-266 and Lys-290.

It belongs to the thymidine/pyrimidine-nucleoside phosphorylase family. Type 2 subfamily.

It catalyses the reaction AMP + phosphate = alpha-D-ribose 1,5-bisphosphate + adenine. The enzyme catalyses CMP + phosphate = cytosine + alpha-D-ribose 1,5-bisphosphate. It carries out the reaction UMP + phosphate = alpha-D-ribose 1,5-bisphosphate + uracil. Its function is as follows. Catalyzes the conversion of AMP and phosphate to adenine and ribose 1,5-bisphosphate (R15P). Exhibits phosphorylase activity toward CMP and UMP in addition to AMP. Functions in an archaeal AMP degradation pathway, together with R15P isomerase and RubisCO. The polypeptide is AMP phosphorylase (Methanococcus maripaludis (strain C6 / ATCC BAA-1332)).